The sequence spans 1157 residues: uncharacterized protein (1157 aa).

The signal sequence occupies residues 1-18; that stretch reads MNRNIFITLLISLLALSG. Residue C19 is the site of N-palmitoyl cysteine attachment. Residue C19 is the site of S-diacylglycerol cysteine attachment. The next 4 membrane-spanning stretches (helical) occupy residues 292 to 312, 394 to 414, 423 to 443, and 458 to 478; these read LSVS…FLIG, LGFI…LLIF, ALIT…FMLF, and ISYA…GMII. Positions 1134 to 1157 are disordered; that stretch reads QYQKPVENSGRKLRKLEDHLRNMK. Residues 1148-1157 show a composition bias toward basic and acidic residues; the sequence is KLEDHLRNMK.

Belongs to the TrbL/VirB6 family.

It localises to the cell membrane. This is an uncharacterized protein from Rickettsia bellii (strain RML369-C).